Here is a 265-residue protein sequence, read N- to C-terminus: Glutamate racemase 2 (265 aa).

Substrate is bound by residues 7-8 (DS) and 39-40 (YG). Catalysis depends on Cys-70, which acts as the Proton donor/acceptor. Substrate is bound at residue 71–72 (NT). The active-site Proton donor/acceptor is the Cys-182. 183–184 (TH) contacts substrate.

It belongs to the aspartate/glutamate racemases family.

The enzyme catalyses L-glutamate = D-glutamate. It participates in cell wall biogenesis; peptidoglycan biosynthesis. Its function is as follows. Provides the (R)-glutamate required for cell wall biosynthesis. This chain is Glutamate racemase 2 (yrpC), found in Bacillus subtilis (strain 168).